A 309-amino-acid polypeptide reads, in one-letter code: Homoserine kinase (309 aa).

ATP is bound at residue 91–101; that stretch reads PIGSGLGSSAC.

It belongs to the GHMP kinase family. Homoserine kinase subfamily.

The protein resides in the cytoplasm. The catalysed reaction is L-homoserine + ATP = O-phospho-L-homoserine + ADP + H(+). It functions in the pathway amino-acid biosynthesis; L-threonine biosynthesis; L-threonine from L-aspartate: step 4/5. Functionally, catalyzes the ATP-dependent phosphorylation of L-homoserine to L-homoserine phosphate. The sequence is that of Homoserine kinase (thrB) from Serratia marcescens.